A 376-amino-acid chain; its full sequence is Eugenol O-methyltransferase (376 aa).

Gly219, Asp242, Met263, and Lys276 together coordinate S-adenosyl-L-methionine. The Proton acceptor role is filled by His280.

The protein belongs to the class I-like SAM-binding methyltransferase superfamily. Cation-independent O-methyltransferase family. COMT subfamily. As to quaternary structure, homodimer. As to expression, expressed predominantly in root hairs.

The catalysed reaction is (E)-isoeugenol + S-adenosyl-L-methionine = (E)-isomethyleugenol + S-adenosyl-L-homocysteine + H(+). Functionally, O-methyltransferase. Substrate preference is eugenol &gt;&gt; orcinol monomethyl ether &gt; resorcinol monomethyl ether. This chain is Eugenol O-methyltransferase (EOMT), found in Sorghum bicolor (Sorghum).